A 150-amino-acid polypeptide reads, in one-letter code: Large ribosomal subunit protein bL9 (150 aa).

This sequence belongs to the bacterial ribosomal protein bL9 family.

Its function is as follows. Binds to the 23S rRNA. This Latilactobacillus sakei subsp. sakei (strain 23K) (Lactobacillus sakei subsp. sakei) protein is Large ribosomal subunit protein bL9.